The chain runs to 1034 residues: Integrin alpha-V (1034 aa).

The N-terminal stretch at 1-19 (MAALRASLLLSCALTAARA) is a signal peptide. Residues 20–978 (FNLDAERPAV…WGIQPQPMPV (959 aa)) lie on the Extracellular side of the membrane. FG-GAP repeat units follow at residues 21 to 86 (NLDA…RNCQ), 97 to 158 (DFAP…VEYA), 161 to 213 (RSTT…LAKY), 225 to 279 (QLAT…GKNM), 280 to 345 (SSMY…GGFQ), 346 to 403 (IAKL…GLNA), and 407 to 470 (RILE…VNPT). An N-linked (GlcNAc...) asparagine glycan is attached at Asn-62. Intrachain disulfides connect Cys-77–Cys-85, Cys-126–Cys-146, and Cys-160–Cys-173. Ca(2+)-binding residues include Asp-248, Asp-252, Ile-254, and Asp-256. 2 N-linked (GlcNAc...) asparagine glycosylation sites follow: Asn-278 and Asn-284. Ca(2+)-binding residues include Asp-302, Asn-304, Asp-306, Tyr-308, Asp-310, Asp-367, Asp-369, Asp-371, Phe-373, Asp-375, Asp-431, Asp-433, Asn-435, Tyr-437, and Asp-439. Cystine bridges form between Cys-479–Cys-488 and Cys-494–Cys-551. N-linked (GlcNAc...) asparagine glycans are attached at residues Asn-540 and Asn-601. Disulfide bonds link Cys-612-Cys-618 and Cys-684-Cys-697. 4 N-linked (GlcNAc...) asparagine glycosylation sites follow: Asn-690, Asn-821, Asn-837, and Asn-860. Cystine bridges form between Cys-838–Cys-900 and Cys-890–Cys-895. 4 N-linked (GlcNAc...) asparagine glycosylation sites follow: Asn-931, Asn-951, Asn-959, and Asn-966. A helical transmembrane segment spans residues 979–1002 (PVWVIILAVLAGLLLLAVLVLVMY). Topologically, residues 1003-1034 (RMGFFKRVRPPQEEQEREQLQPHENGEGTSEA) are cytoplasmic. The GFFKR motif motif lies at 1005–1009 (GFFKR). Positions 1013–1028 (PQEEQEREQLQPHENG) are enriched in basic and acidic residues. The tract at residues 1013–1034 (PQEEQEREQLQPHENGEGTSEA) is disordered.

This sequence belongs to the integrin alpha chain family. As to quaternary structure, heterodimer of an alpha and a beta subunit. The alpha subunit is composed of a heavy and a light chain linked by a disulfide bond. Alpha-V (ITGAV) associates with either beta-1 (ITGB1), beta-3 (ITGB3), beta-5 (ITGB5), beta-6 (ITGB6) or beta-8 (ITGB8). Interacts with RAB25. Interacts with CIB1. Integrins ITGAV:ITGB3 and ITGAV:ITGB5 interact with FBLN5 (via N-terminus). ITGAV:ITGB3 and ITGAV:ITGB5 interact with CCN3. ITGAV:ITGB3 interacts with ADGRA2. ITGAV:ITGB3 interacts with FGF2; it is likely that FGF2 can simultaneously bind ITGAV:ITGB3 and FGF receptors. ITGAV:ITGB3 is found in a ternary complex with CX3CR1 and CX3CL1. ITGAV:ITGB3 is found in a ternary complex with NRG1 and ERBB3. ITGAV:ITGB3 is found in a ternary complex with FGF1 and FGFR1. ITGAV:ITGB3 is found in a ternary complex with IGF1 and IGF1R. ITGAV:ITGB3 interacts with IGF2. ITGAV:ITGB3 and ITGAV:ITGB6 interact with FBN1. ITGAV:ITGB3 interacts with CD9, CD81 and CD151 (via second extracellular domain). ITGAV:ITGB6 interacts with TGFB1.

Its subcellular location is the membrane. It is found in the cell junction. It localises to the focal adhesion. In terms of biological role, the alpha-V (ITGAV) integrins are receptors for vitronectin, cytotactin, fibronectin, fibrinogen, laminin, matrix metalloproteinase-2, osteopontin, osteomodulin, prothrombin, thrombospondin, TGFB1 and vWF. They recognize the sequence R-G-D in a wide array of ligands. Alpha-V integrins may play a role in embryo implantation, angiogenesis and wound healing. ITGAV:ITGB3 binds to fractalkine (CX3CL1) and may act as its coreceptor in CX3CR1-dependent fractalkine signaling. ITGAV:ITGB3 binds to NRG1 (via EGF domain) and this binding is essential for NRG1-ERBB signaling. ITGAV:ITGB3 binds to FGF1 and this binding is essential for FGF1 signaling. ITGAV:ITGB3 binds to FGF2 and this binding is essential for FGF2 signaling. ITGAV:ITGB3 binds to IGF1 and this binding is essential for IGF1 signaling. ITGAV:ITGB3 binds to IGF2 and this binding is essential for IGF2 signaling. ITGAV:ITGB3 binds to IL1B and this binding is essential for IL1B signaling. ITGAV:ITGB3 binds to PLA2G2A via a site (site 2) which is distinct from the classical ligand-binding site (site 1) and this induces integrin conformational changes and enhanced ligand binding to site 1. ITGAV:ITGB3 and ITGAV:ITGB6 act as receptors for fibrillin-1 (FBN1) and mediate R-G-D-dependent cell adhesion to FBN1. Integrin alpha-V/beta-6 or alpha-V/beta-8 (ITGAV:ITGB6 or ITGAV:ITGB8) mediates R-G-D-dependent release of transforming growth factor beta-1 (TGF-beta-1) from regulatory Latency-associated peptide (LAP), thereby playing a key role in TGF-beta-1 activation. ITGAV:ITGB3 acts as a receptor for CD40LG. ITGAV:ITGB3 acts as a receptor for IBSP and promotes cell adhesion and migration to IBSP. This chain is Integrin alpha-V (ITGAV), found in Gallus gallus (Chicken).